We begin with the raw amino-acid sequence, 277 residues long: Sulfur carrier protein FdhD (277 aa).

Catalysis depends on cysteine 121, which acts as the Cysteine persulfide intermediate. A Mo-bis(molybdopterin guanine dinucleotide)-binding site is contributed by 260 to 265; it reads FCKPGR.

This sequence belongs to the FdhD family.

It localises to the cytoplasm. Functionally, required for formate dehydrogenase (FDH) activity. Acts as a sulfur carrier protein that transfers sulfur from IscS to the molybdenum cofactor prior to its insertion into FDH. In Escherichia coli O8 (strain IAI1), this protein is Sulfur carrier protein FdhD.